The sequence spans 358 residues: UDP-N-acetylglucosamine--N-acetylmuramyl-(pentapeptide) pyrophosphoryl-undecaprenol N-acetylglucosamine transferase (358 aa).

Residues 10–12 (TGG), asparagine 124, arginine 165, serine 191, isoleucine 246, and glutamine 291 contribute to the UDP-N-acetyl-alpha-D-glucosamine site.

Belongs to the glycosyltransferase 28 family. MurG subfamily.

The protein localises to the cell inner membrane. It catalyses the reaction di-trans,octa-cis-undecaprenyl diphospho-N-acetyl-alpha-D-muramoyl-L-alanyl-D-glutamyl-meso-2,6-diaminopimeloyl-D-alanyl-D-alanine + UDP-N-acetyl-alpha-D-glucosamine = di-trans,octa-cis-undecaprenyl diphospho-[N-acetyl-alpha-D-glucosaminyl-(1-&gt;4)]-N-acetyl-alpha-D-muramoyl-L-alanyl-D-glutamyl-meso-2,6-diaminopimeloyl-D-alanyl-D-alanine + UDP + H(+). The protein operates within cell wall biogenesis; peptidoglycan biosynthesis. Its function is as follows. Cell wall formation. Catalyzes the transfer of a GlcNAc subunit on undecaprenyl-pyrophosphoryl-MurNAc-pentapeptide (lipid intermediate I) to form undecaprenyl-pyrophosphoryl-MurNAc-(pentapeptide)GlcNAc (lipid intermediate II). This Citrifermentans bemidjiense (strain ATCC BAA-1014 / DSM 16622 / JCM 12645 / Bem) (Geobacter bemidjiensis) protein is UDP-N-acetylglucosamine--N-acetylmuramyl-(pentapeptide) pyrophosphoryl-undecaprenol N-acetylglucosamine transferase.